The following is a 535-amino-acid chain: UDP-glucuronosyltransferase 1A1 (535 aa).

A signal peptide spans 1–29; it reads MSVVCRSSCSLLLLPCLLLCVLGPSASHA. N-linked (GlcNAc...) asparagine glycosylation is found at N89, N297, and N435. A helical membrane pass occupies residues 493–509; sequence VIGFLLAIVLTVVFIVY.

Belongs to the UDP-glycosyltransferase family. Homodimers. Homooligomer. Interacts with UGT1A3, UGT1A4, UGT1A6, UGT1A7, UGT1A8, UGT1A9 and UGT1A10 to form heterodimers.

Its subcellular location is the endoplasmic reticulum membrane. The catalysed reaction is glucuronate acceptor + UDP-alpha-D-glucuronate = acceptor beta-D-glucuronoside + UDP + H(+). It carries out the reaction 17beta-estradiol + UDP-alpha-D-glucuronate = 17beta-estradiol 3-O-(beta-D-glucuronate) + UDP + H(+). The enzyme catalyses 2-hydroxyestrone + UDP-alpha-D-glucuronate = 2-hydroxyestrone 3-O-(beta-D-glucuronate) + UDP + H(+). It catalyses the reaction 2-hydroxy-17beta-estradiol + UDP-alpha-D-glucuronate = 2-hydroxy-17beta-estradiol 3-O-(beta-D-glucuronate) + UDP + H(+). The catalysed reaction is 2-methoxy-17beta-estradiol + UDP-alpha-D-glucuronate = 2-methoxy-17beta-estradiol 3-O-(beta-D-glucuronate) + UDP + H(+). It carries out the reaction 17alpha-estradiol + UDP-alpha-D-glucuronate = 17alpha-estradiol 3-O-(beta-D-glucuronate) + UDP + H(+). The enzyme catalyses 16beta,17beta-estriol + UDP-alpha-D-glucuronate = 16beta,17beta-estriol 16-O-(beta-D-glucuronate) + UDP + H(+). It catalyses the reaction losartan + UDP-alpha-D-glucuronate = losartan-2-N-beta-D-glucuronide + UDP. The catalysed reaction is prunetin + UDP-alpha-D-glucuronate = prunetin-4'-O-beta-D-glucuronide + UDP. It carries out the reaction SN-38 + UDP-alpha-D-glucuronate = SN-38 O-beta-D-glucuronide + UDP + H(+). The enzyme catalyses (4Z,15Z)-bilirubin IXalpha + UDP-alpha-D-glucuronate = (4Z,15Z)-bilirubin IXalpha C12-beta-D-glucuronoside + UDP. It catalyses the reaction (4Z,15Z)-bilirubin IXalpha + UDP-alpha-D-glucuronate = (4Z,15Z)-bilirubin IXalpha C8-beta-D-glucuronoside + UDP. The catalysed reaction is (4Z,15Z)-bilirubin IXalpha C8-beta-D-glucuronoside + UDP-alpha-D-glucuronate = (4Z,15Z)-bilirubin IXalpha C8,C12-beta-D-bisglucuronoside + UDP. It carries out the reaction (4Z,15Z)-bilirubin IXalpha C12-beta-D-glucuronoside + UDP-alpha-D-glucuronate = (4Z,15Z)-bilirubin IXalpha C8,C12-beta-D-bisglucuronoside + UDP. The enzyme catalyses 8-iso-prostaglandin F2alpha + UDP-alpha-D-glucuronate = 8-iso-prostaglandin F2alpha-glucuronide + UDP + H(+). It catalyses the reaction (5Z,8Z,11Z,14Z)-eicosatetraenoate + UDP-alpha-D-glucuronate = O-[(5Z),(8Z),(11Z),(14Z)-eicosatetraenoyl]-beta-D-glucuronate + UDP. The catalysed reaction is 15-hydroxy-(5Z,8Z,11Z,13E)-eicosatetraenoate + UDP-alpha-D-glucuronate = 15-O-(beta-D-glucuronosyl)-(5Z,8Z,11Z,14Z)-eicosatetraenoate + UDP + H(+). It carries out the reaction 20-hydroxy-(5Z,8Z,11Z,14Z)-eicosatetraenoate + UDP-alpha-D-glucuronate = 20-O-(beta-D-glucuronosyl)-(5Z,8Z,11Z,14Z)-eicosatetraenoate + UDP + H(+). The enzyme catalyses prostaglandin B1 + UDP-alpha-D-glucuronate = 15-O-(beta-D-glucuronosyl)-prostaglandin B1 + UDP + H(+). It catalyses the reaction (E)-ferulate + UDP-alpha-D-glucuronate = (E)-4-O-(beta-D-glucuronosyl)-ferulate + UDP + H(+). The catalysed reaction is (E)-ferulate + UDP-alpha-D-glucuronate = (E)-ferulic acid beta-D-glucuronate ester + UDP. UDP-glucuronosyltransferase (UGT) that catalyzes phase II biotransformation reactions in which lipophilic substrates are conjugated with glucuronic acid to increase the metabolite's water solubility, thereby facilitating excretion into either the urine or bile. Essential for the elimination and detoxification of drugs, xenobiotics and endogenous compounds. Catalyzes the glucuronidation of endogenous estrogen hormones such as estradiol, estrone and estriol. Involved in the glucuronidation of bilirubin, a degradation product occurring in the normal catabolic pathway that breaks down heme in vertebrates. Involved in the glucuronidation of arachidonic acid (AA) and AA-derived eicosanoids including 15-HETE, 20-HETE, PGB1 and F2-isoprostane (8-iso-PGF2alpha). Involved in the glucuronidation of the phytochemical ferulic acid at the phenolic or the carboxylic acid group. Also catalyzes the glucuronidation the isoflavones genistein, daidzein, glycitein, formononetin, biochanin A and prunetin, which are phytoestrogens with anticancer and cardiovascular properties. Involved in the glucuronidation of the AGTR1 angiotensin receptor antagonist losartan, a drug which can inhibit the effect of angiotensin II. Involved in the biotransformation of 7-ethyl-10-hydroxycamptothecin (SN-38), the pharmacologically active metabolite of the anticancer drug irinotecan. The polypeptide is UDP-glucuronosyltransferase 1A1 (Rattus norvegicus (Rat)).